Consider the following 380-residue polypeptide: Hydrogenase maturation factor HypD2 (380 aa).

Fe cation contacts are provided by C36, C64, and C67.

It belongs to the HypD family. [4Fe-4S] cluster is required as a cofactor.

Its pathway is protein modification; [NiFe] hydrogenase maturation. In terms of biological role, involved in the maturation of [NiFe] hydrogenases. Involved in the biosynthesis of the Fe(CN)(2)CO cofactor. The chain is Hydrogenase maturation factor HypD2 (hypD2) from Bradyrhizobium diazoefficiens (strain JCM 10833 / BCRC 13528 / IAM 13628 / NBRC 14792 / USDA 110).